Reading from the N-terminus, the 533-residue chain is Basal body-orientation factor 1 (533 aa).

Residues 1–30 (MPAKDKRKDKRKDKRKGKNKGKEPKKIIKS) form a disordered region. A compositionally biased stretch (basic residues) spans 7–19 (RKDKRKDKRKGKN). The segment covering 20-30 (KGKEPKKIIKS) has biased composition (basic and acidic residues). Coiled-coil stretches lie at residues 34–207 (AIER…EAEK) and 246–368 (LKEA…VEQF). Residues 277-533 (VKEKIMQLTQ…PQGLQDSDIA (257 aa)) are interaction with MNS1 and ODF2. The span at 507 to 517 (QQAPVSDSNRM) shows a compositional bias: polar residues. Positions 507–533 (QQAPVSDSNRMVSPDVIPQGLQDSDIA) are disordered.

Belongs to the BBOF1 family. As to quaternary structure, interacts with MNS1 and ODF2. As to expression, expressed exclusively in the testis and predominantly expressed in male germ cells.

The protein localises to the cytoplasm. Its subcellular location is the cytoskeleton. It is found in the cilium basal body. The protein resides in the flagellum axoneme. In terms of biological role, plays an essential role in sperm motility and male fertility by stabilizing the sperm flagellar axonemal structure. May be required for the stability of ODF2 and MANS1 proteins. Dispensable for the assembly and function of motile cilia. This chain is Basal body-orientation factor 1, found in Mus musculus (Mouse).